The sequence spans 41 residues: U-theraphotoxin-Lk1a (41 aa).

3 disulfides stabilise this stretch: Cys-1-Cys-16, Cys-8-Cys-21, and Cys-15-Cys-36.

It belongs to the neurotoxin 14 (magi-1) family. 08 (Ltx-4) subfamily. Expressed by the venom gland.

The protein localises to the secreted. Toxin that causes irreversible contractile paralysis in adult Aedes aegypti resulting in 100% mortality after 24 hours. The polypeptide is U-theraphotoxin-Lk1a (Lasiodora klugi (Bahia scarlet tarantula)).